The following is a 377-amino-acid chain: Nitric oxide reductase FlRd-NAD(+) reductase (377 aa).

Belongs to the FAD-dependent oxidoreductase family. Requires FAD as cofactor.

It is found in the cytoplasm. The catalysed reaction is 2 reduced [nitric oxide reductase rubredoxin domain] + NAD(+) + H(+) = 2 oxidized [nitric oxide reductase rubredoxin domain] + NADH. It participates in nitrogen metabolism; nitric oxide reduction. Functionally, one of at least two accessory proteins for anaerobic nitric oxide (NO) reductase. Reduces the rubredoxin moiety of NO reductase. This is Nitric oxide reductase FlRd-NAD(+) reductase from Salmonella paratyphi C (strain RKS4594).